A 95-amino-acid polypeptide reads, in one-letter code: Citrate lyase acyl carrier protein (95 aa).

At Ser14 the chain carries O-(phosphoribosyl dephospho-coenzyme A)serine.

Belongs to the CitD family. In terms of assembly, oligomer with a subunit composition of (alpha,beta,gamma)6.

Its subcellular location is the cytoplasm. Covalent carrier of the coenzyme of citrate lyase. This chain is Citrate lyase acyl carrier protein, found in Haemophilus ducreyi (strain 35000HP / ATCC 700724).